A 207-amino-acid polypeptide reads, in one-letter code: Ribonuclease HII (207 aa).

Residues 12–201 (DLVAGVDEVG…VRAAWEAREG (190 aa)) form the RNase H type-2 domain. A divalent metal cation contacts are provided by aspartate 18, glutamate 19, and aspartate 110.

It belongs to the RNase HII family. The cofactor is Mn(2+). Mg(2+) serves as cofactor.

The protein localises to the cytoplasm. It carries out the reaction Endonucleolytic cleavage to 5'-phosphomonoester.. Its function is as follows. Endonuclease that specifically degrades the RNA of RNA-DNA hybrids. The protein is Ribonuclease HII of Pseudomonas putida (strain W619).